Here is a 309-residue protein sequence, read N- to C-terminus: Assembly-complementing factor 4 (309 aa).

Disordered stretches follow at residues 1 to 80 (MSED…ASPI), 164 to 240 (KSIN…ENTP), and 286 to 309 (VRSEDEDDEEFEPMGDIPVHLFKR). 2 stretches are compositionally biased toward basic and acidic residues: residues 13-24 (ELHKLSIVDKHS) and 34-44 (KQHEVQPESKS). Residues serine 44, serine 71, serine 74, serine 78, and serine 165 each carry the phosphoserine modification. The segment covering 61-80 (SSPQRSTTNQSPVSDHASPI) has biased composition (polar residues). Low complexity-rich tracts occupy residues 174–188 (NNNVNSNINNTLPNR), 205–214 (PSRSSESTPT), and 222–239 (PRNTMKNANTTATAGENT). Over residues 287–298 (RSEDEDDEEFEP) the composition is skewed to acidic residues. Residue serine 288 is modified to Phosphoserine.

In terms of biological role, may be involved in actin cytoskeleton organization and biogenesis. The protein is Assembly-complementing factor 4 (ACF4) of Saccharomyces cerevisiae (strain ATCC 204508 / S288c) (Baker's yeast).